The chain runs to 244 residues: Aliphatic sulfonates import ATP-binding protein SsuB 2 (244 aa).

The region spanning 13–229 (VQVRSLVRGF…ALGDSKFHEF (217 aa)) is the ABC transporter domain. 45-52 (GKSGSGKS) lines the ATP pocket.

It belongs to the ABC transporter superfamily. Aliphatic sulfonates importer (TC 3.A.1.17.2) family. In terms of assembly, the complex is composed of two ATP-binding proteins (SsuB), two transmembrane proteins (SsuC) and a solute-binding protein (SsuA).

The protein localises to the cell membrane. The catalysed reaction is ATP + H2O + aliphatic sulfonate-[sulfonate-binding protein]Side 1 = ADP + phosphate + aliphatic sulfonateSide 2 + [sulfonate-binding protein]Side 1.. Functionally, part of the ABC transporter complex SsuABC involved in aliphatic sulfonates import. Responsible for energy coupling to the transport system. The chain is Aliphatic sulfonates import ATP-binding protein SsuB 2 from Rhodococcus jostii (strain RHA1).